Consider the following 501-residue polypeptide: Xylulose kinase (501 aa).

81-82 lines the substrate pocket; the sequence is MH. Catalysis depends on aspartate 239, which acts as the Proton acceptor.

The protein belongs to the FGGY kinase family.

It carries out the reaction D-xylulose + ATP = D-xylulose 5-phosphate + ADP + H(+). Functionally, catalyzes the phosphorylation of D-xylulose to D-xylulose 5-phosphate. The polypeptide is Xylulose kinase (Lactococcus lactis subsp. lactis (strain IL1403) (Streptococcus lactis)).